A 734-amino-acid chain; its full sequence is Phosphoribosylformylglycinamidine synthase subunit PurL (734 aa).

H49 is a catalytic residue. The ATP site is built by Y52 and K91. E93 serves as a coordination point for Mg(2+). Substrate contacts are provided by residues 94 to 97 and R116; that span reads SHNH. Catalysis depends on H95, which acts as the Proton acceptor. D117 lines the Mg(2+) pocket. Residue Q240 participates in substrate binding. D268 is a binding site for Mg(2+). Residue 312 to 314 coordinates substrate; that stretch reads ESQ. ATP contacts are provided by D491 and G528. Residue N529 coordinates Mg(2+). S531 contributes to the substrate binding site.

The protein belongs to the FGAMS family. In terms of assembly, monomer. Part of the FGAM synthase complex composed of 1 PurL, 1 PurQ and 2 PurS subunits.

Its subcellular location is the cytoplasm. It catalyses the reaction N(2)-formyl-N(1)-(5-phospho-beta-D-ribosyl)glycinamide + L-glutamine + ATP + H2O = 2-formamido-N(1)-(5-O-phospho-beta-D-ribosyl)acetamidine + L-glutamate + ADP + phosphate + H(+). It functions in the pathway purine metabolism; IMP biosynthesis via de novo pathway; 5-amino-1-(5-phospho-D-ribosyl)imidazole from N(2)-formyl-N(1)-(5-phospho-D-ribosyl)glycinamide: step 1/2. Part of the phosphoribosylformylglycinamidine synthase complex involved in the purines biosynthetic pathway. Catalyzes the ATP-dependent conversion of formylglycinamide ribonucleotide (FGAR) and glutamine to yield formylglycinamidine ribonucleotide (FGAM) and glutamate. The FGAM synthase complex is composed of three subunits. PurQ produces an ammonia molecule by converting glutamine to glutamate. PurL transfers the ammonia molecule to FGAR to form FGAM in an ATP-dependent manner. PurS interacts with PurQ and PurL and is thought to assist in the transfer of the ammonia molecule from PurQ to PurL. This is Phosphoribosylformylglycinamidine synthase subunit PurL from Zymomonas mobilis subsp. mobilis (strain ATCC 31821 / ZM4 / CP4).